A 453-amino-acid chain; its full sequence is DNA repair protein RadA (453 aa).

Residues 10–27 (CQECGYQSPKYLGRCPNC) form a C4-type zinc finger. Residue 95 to 102 (GDPGIGKS) participates in ATP binding. Positions 251–255 (KNRFG) match the RadA KNRFG motif motif. The lon-protease-like stretch occupies residues 350–453 (DAYLKSAGGV…VGQVLKAVFS (104 aa)).

Belongs to the RecA family. RadA subfamily.

DNA-dependent ATPase involved in processing of recombination intermediates, plays a role in repairing DNA breaks. Stimulates the branch migration of RecA-mediated strand transfer reactions, allowing the 3' invading strand to extend heteroduplex DNA faster. Binds ssDNA in the presence of ADP but not other nucleotides, has ATPase activity that is stimulated by ssDNA and various branched DNA structures, but inhibited by SSB. Does not have RecA's homology-searching function. This Streptococcus pyogenes serotype M3 (strain ATCC BAA-595 / MGAS315) protein is DNA repair protein RadA.